A 181-amino-acid chain; its full sequence is Probable pyruvoyl-dependent arginine decarboxylase (181 aa).

The residue at position 43 (serine 43) is a Pyruvic acid (Ser).

The protein belongs to the PdaD family. The cofactor is pyruvate.

The catalysed reaction is L-arginine + H(+) = agmatine + CO2. The polypeptide is Probable pyruvoyl-dependent arginine decarboxylase (Chlorobium phaeobacteroides (strain BS1)).